The primary structure comprises 474 residues: 3-isopropylmalate dehydratase large subunit (474 aa).

The [4Fe-4S] cluster site is built by cysteine 355, cysteine 415, and cysteine 418.

It belongs to the aconitase/IPM isomerase family. LeuC type 1 subfamily. As to quaternary structure, heterodimer of LeuC and LeuD. [4Fe-4S] cluster is required as a cofactor.

It catalyses the reaction (2R,3S)-3-isopropylmalate = (2S)-2-isopropylmalate. It participates in amino-acid biosynthesis; L-leucine biosynthesis; L-leucine from 3-methyl-2-oxobutanoate: step 2/4. Catalyzes the isomerization between 2-isopropylmalate and 3-isopropylmalate, via the formation of 2-isopropylmaleate. The polypeptide is 3-isopropylmalate dehydratase large subunit (Shewanella putrefaciens (strain CN-32 / ATCC BAA-453)).